The sequence spans 702 residues: MANKLTQPKGSISKETNKEAIARLFGIKKTAVGYISTSVLIDPYTILYDESTETCWYRGTATGTPISWIITNGSLTLQTTSGQFALIKTQVDINLRQEITGEVGYSNIGKVSSVTSLRSIEPTTNGQQIILNQINSTLGTTTGGIFCYDSSDVTSIDDGYTVIVTATGKRWKRPENYIDMAWFGALNPAVDFSDAWDAAVAIVSNYVSNVGFYGRKAIYLKAGTYKPSRQLDIPSYVSVVAIGNVTIDGSGMPDNSYVIRIINKVSGISTTYHKGWNLGSIGGTFRVLGNTLDGNVDGIFVGNTSNMSDVRNVILYGVSIGGVRYGLTFGSINTYLFTATDCHIESTIIGIYVPNTTSSNSGERMTFNDCTIGGSRTNHIQISQPGFDVNFTNCSFDFTSGNVFYGTSTWGYSKVSFTSCHMEGYNGLLLSAESPQSSSVGSNRSIIMNNITNLSRLRSNTTGTNSSSRLHIDAKSTPVYINGLDQRHEVTPYLEDCLMCSDETILYINGYIKDPYFQLPSNTMILNKGYNMGDEVVGTVVNSTATLDALTRYTCVDRNAMSATVITGGTAGTQLQVTGAGGYFNLATKSFIPVTVKNRLGLYLSLSALDSTGNIQCTFSVAWYDVNDNLISTSSASSINMRTVFNDTTLPNYSDGNSRYIATPSRTFNAPVGAVKCKPRWQVSGFTGNINVSRMVSFILAG.

Its subcellular location is the virion. Its function is as follows. Functions as a receptor binding protein (RBP) and probably mediates the attachment to the host capsular exopolysaccharides. Displays a depolymerase activity that specifically degrades the K11-type polysaccharides of Klebsiella pneumoniae capsule. The sequence is that of Depolymerase, capsule K11-specific from Klebsiella phage K64-1 (Bacteriophage K64-1).